Consider the following 192-residue polypeptide: Protein FAM169BP (192 aa).

The segment at 121–192 (YQAHPGNSED…PPGKLTRSSP (72 aa)) is disordered. The segment covering 159–177 (EELEDTKDDPECGVEEEDA) has biased composition (acidic residues).

This sequence belongs to the FAM169 family.

The sequence is that of Protein FAM169BP from Homo sapiens (Human).